A 233-amino-acid chain; its full sequence is Octanoyltransferase (233 aa).

Residues 38 to 218 enclose the BPL/LPL catalytic domain; sequence AGGPDTLLLL…AVCDALDGVL (181 aa). A compositionally biased stretch (basic and acidic residues) spans 57–66; the sequence is RRTEPHERPL. The tract at residues 57–77 is disordered; that stretch reads RRTEPHERPLDGTPVVDTDRG. Substrate contacts are provided by residues 76-83, 148-150, and 161-163; these read RGGKITWH, AIG, and GFA. The active-site Acyl-thioester intermediate is the cysteine 179.

The protein belongs to the LipB family.

The protein resides in the cytoplasm. The enzyme catalyses octanoyl-[ACP] + L-lysyl-[protein] = N(6)-octanoyl-L-lysyl-[protein] + holo-[ACP] + H(+). The protein operates within protein modification; protein lipoylation via endogenous pathway; protein N(6)-(lipoyl)lysine from octanoyl-[acyl-carrier-protein]: step 1/2. Catalyzes the transfer of endogenously produced octanoic acid from octanoyl-acyl-carrier-protein onto the lipoyl domains of lipoate-dependent enzymes. Lipoyl-ACP can also act as a substrate although octanoyl-ACP is likely to be the physiological substrate. This Mycolicibacterium paratuberculosis (strain ATCC BAA-968 / K-10) (Mycobacterium paratuberculosis) protein is Octanoyltransferase.